The chain runs to 475 residues: UDP-N-acetylmuramate--L-alanine ligase (475 aa).

Residue 114–120 (GTHGKTT) participates in ATP binding.

The protein belongs to the MurCDEF family.

Its subcellular location is the cytoplasm. It carries out the reaction UDP-N-acetyl-alpha-D-muramate + L-alanine + ATP = UDP-N-acetyl-alpha-D-muramoyl-L-alanine + ADP + phosphate + H(+). It functions in the pathway cell wall biogenesis; peptidoglycan biosynthesis. In terms of biological role, cell wall formation. The sequence is that of UDP-N-acetylmuramate--L-alanine ligase from Bartonella tribocorum (strain CIP 105476 / IBS 506).